A 229-amino-acid chain; its full sequence is Cytochrome c oxidase subunit 2 (229 aa).

The Mitochondrial intermembrane segment spans residues 1–26 (MATWSNLGLQDSASPLMEQLNFFHDH). The chain crosses the membrane as a helical span at residues 27-48 (TLLILIMITILVGYLMLMLFFN). Residues 49–62 (KFTNRFLLHGQTIE) lie on the Mitochondrial matrix side of the membrane. A helical transmembrane segment spans residues 63-82 (IIWTILPAIVLMFIALPSLR). Topologically, residues 83-229 (ILYLLDEINS…IKWITAMNSN (147 aa)) are mitochondrial intermembrane. 6 residues coordinate Cu cation: His161, Cys196, Glu198, Cys200, His204, and Met207. A Mg(2+)-binding site is contributed by Glu198.

This sequence belongs to the cytochrome c oxidase subunit 2 family. In terms of assembly, component of the cytochrome c oxidase (complex IV, CIV), a multisubunit enzyme composed of a catalytic core of 3 subunits and several supernumerary subunits. The complex exists as a monomer or a dimer and forms supercomplexes (SCs) in the inner mitochondrial membrane with ubiquinol-cytochrome c oxidoreductase (cytochrome b-c1 complex, complex III, CIII). The cofactor is Cu cation.

The protein resides in the mitochondrion inner membrane. It carries out the reaction 4 Fe(II)-[cytochrome c] + O2 + 8 H(+)(in) = 4 Fe(III)-[cytochrome c] + 2 H2O + 4 H(+)(out). Its function is as follows. Component of the cytochrome c oxidase, the last enzyme in the mitochondrial electron transport chain which drives oxidative phosphorylation. The respiratory chain contains 3 multisubunit complexes succinate dehydrogenase (complex II, CII), ubiquinol-cytochrome c oxidoreductase (cytochrome b-c1 complex, complex III, CIII) and cytochrome c oxidase (complex IV, CIV), that cooperate to transfer electrons derived from NADH and succinate to molecular oxygen, creating an electrochemical gradient over the inner membrane that drives transmembrane transport and the ATP synthase. Cytochrome c oxidase is the component of the respiratory chain that catalyzes the reduction of oxygen to water. Electrons originating from reduced cytochrome c in the intermembrane space (IMS) are transferred via the dinuclear copper A center (CU(A)) of subunit 2 and heme A of subunit 1 to the active site in subunit 1, a binuclear center (BNC) formed by heme A3 and copper B (CU(B)). The BNC reduces molecular oxygen to 2 water molecules using 4 electrons from cytochrome c in the IMS and 4 protons from the mitochondrial matrix. In Simulium vittatum (Striped black fly), this protein is Cytochrome c oxidase subunit 2 (COII).